Consider the following 178-residue polypeptide: Zinc finger protein ZAT11 (178 aa).

2 consecutive C2H2-type zinc fingers follow at residues 47–69 and 94–116; these read FECK…RASH and HKCS…MRRH.

Expressed in leaves.

It is found in the nucleus. In terms of biological role, probable transcription factor that may be involved in stress responses. The chain is Zinc finger protein ZAT11 (ZAT11) from Arabidopsis thaliana (Mouse-ear cress).